The sequence spans 389 residues: Pyruvate dehydrogenase E1 component subunit alpha, somatic form, mitochondrial (389 aa).

Residues 1-28 (GKMLAAVSRVLSGVAQKPASRVLVASRT) constitute a mitochondrion transit peptide. Lys-62 is subject to N6-acetyllysine; alternate. An N6-succinyllysine; alternate modification is found at Lys-62. Residues His-91, Tyr-117, Arg-118, Ala-156, Gly-164, Val-166, Asp-195, Gly-196, Ala-197, Asn-224, and Tyr-226 each coordinate pyruvate. The thiamine diphosphate site is built by Tyr-117 and Arg-118. Thiamine diphosphate contacts are provided by Gly-164, Val-166, Asp-195, Gly-196, Ala-197, and Asn-224. Asp-195 contacts Mg(2+). Positions 224 and 226 each coordinate Mg(2+). Phosphoserine; by PDK1 is present on Ser-231. Residue Lys-243 is modified to N6-acetyllysine; alternate. Lys-243 is modified (N6-succinyllysine; alternate). Lys-276 is subject to N6-succinyllysine. His-291 contributes to the thiamine diphosphate binding site. Ser-292 carries the phosphoserine; by PDK1, PDK2, PDK3 and PDK4 modification. Residue Ser-294 is modified to Phosphoserine. Ser-299 carries the post-translational modification Phosphoserine; by PDK1, PDK2, PDK3 and PDK4. Tyr-300 is modified (phosphotyrosine). Lys-312 carries the post-translational modification N6-acetyllysine; alternate. At Lys-312 the chain carries N6-succinyllysine; alternate. N6-acetyllysine is present on residues Lys-320 and Lys-335. An N6-succinyllysine modification is found at Lys-384.

Heterotetramer of two PDHA1 and two PDHB subunits. The heterotetramer interacts with DLAT, and is part of the multimeric pyruvate dehydrogenase complex that contains multiple copies of pyruvate dehydrogenase (E1), dihydrolipoamide acetyltransferase (DLAT, E2) and lipoamide dehydrogenase (DLD, E3). These subunits are bound to an inner core composed of about 48 DLAT and 12 PDHX molecules. Requires thiamine diphosphate as cofactor. Mg(2+) serves as cofactor. Post-translationally, phosphorylation at Ser-231, Ser-292 and Ser-299 by PDK family kinases inactivates the enzyme; for this phosphorylation at a single site is sufficient. Phosphorylation at Ser-292 interferes with access to active site, and thereby inactivates the enzyme. Dephosphorylation at all three sites, i.e. at Ser-231, Ser-292 and Ser-299, is required for reactivation. Acetylation alters the phosphorylation pattern. Deacetylated by SIRT3.

The protein localises to the mitochondrion matrix. It catalyses the reaction N(6)-[(R)-lipoyl]-L-lysyl-[protein] + pyruvate + H(+) = N(6)-[(R)-S(8)-acetyldihydrolipoyl]-L-lysyl-[protein] + CO2. With respect to regulation, pyruvate dehydrogenase activity is inhibited by phosphorylation of PDHA1; it is reactivated by dephosphorylation. Functionally, the pyruvate dehydrogenase complex catalyzes the overall conversion of pyruvate to acetyl-CoA and CO(2), and thereby links the glycolytic pathway to the tricarboxylic cycle. The chain is Pyruvate dehydrogenase E1 component subunit alpha, somatic form, mitochondrial (PDHA1) from Sus scrofa (Pig).